We begin with the raw amino-acid sequence, 304 residues long: Sulfate adenylyltransferase subunit 2 (304 aa).

Belongs to the PAPS reductase family. CysD subfamily. In terms of assembly, heterodimer composed of CysD, the smaller subunit, and CysNC.

The catalysed reaction is sulfate + ATP + H(+) = adenosine 5'-phosphosulfate + diphosphate. Its pathway is sulfur metabolism; hydrogen sulfide biosynthesis; sulfite from sulfate: step 1/3. Functionally, with CysN forms the ATP sulfurylase (ATPS) that catalyzes the adenylation of sulfate producing adenosine 5'-phosphosulfate (APS) and diphosphate, the first enzymatic step in sulfur assimilation pathway. APS synthesis involves the formation of a high-energy phosphoric-sulfuric acid anhydride bond driven by GTP hydrolysis by CysN coupled to ATP hydrolysis by CysD. The polypeptide is Sulfate adenylyltransferase subunit 2 (Xylella fastidiosa (strain 9a5c)).